A 268-amino-acid chain; its full sequence is Glutamate racemase (268 aa).

Residues 14-15 and 46-47 contribute to the substrate site; these read DS and YG. The Proton donor/acceptor role is filled by Cys78. 79–80 serves as a coordination point for substrate; sequence NT. The active-site Proton donor/acceptor is Cys192. 193 to 194 lines the substrate pocket; sequence TH.

The protein belongs to the aspartate/glutamate racemases family.

It catalyses the reaction L-glutamate = D-glutamate. Its pathway is cell wall biogenesis; peptidoglycan biosynthesis. Provides the (R)-glutamate required for cell wall biosynthesis. The protein is Glutamate racemase of Sphingopyxis alaskensis (strain DSM 13593 / LMG 18877 / RB2256) (Sphingomonas alaskensis).